A 472-amino-acid chain; its full sequence is Ribulose bisphosphate carboxylase large chain 1 (472 aa).

Substrate-binding residues include asparagine 115 and threonine 165. Lysine 167 (proton acceptor) is an active-site residue. Residue lysine 169 participates in substrate binding. Mg(2+) is bound by residues lysine 193, aspartate 195, and glutamate 196. N6-carboxylysine is present on lysine 193. Catalysis depends on histidine 286, which acts as the Proton acceptor. Residues arginine 287, histidine 319, and serine 371 each coordinate substrate.

The protein belongs to the RuBisCO large chain family. Type I subfamily. In terms of assembly, heterohexadecamer of 8 large chains and 8 small chains. Requires Mg(2+) as cofactor.

The catalysed reaction is 2 (2R)-3-phosphoglycerate + 2 H(+) = D-ribulose 1,5-bisphosphate + CO2 + H2O. It carries out the reaction D-ribulose 1,5-bisphosphate + O2 = 2-phosphoglycolate + (2R)-3-phosphoglycerate + 2 H(+). Functionally, ruBisCO catalyzes two reactions: the carboxylation of D-ribulose 1,5-bisphosphate, the primary event in carbon dioxide fixation, as well as the oxidative fragmentation of the pentose substrate. Both reactions occur simultaneously and in competition at the same active site. In Rhodopseudomonas palustris (strain BisB5), this protein is Ribulose bisphosphate carboxylase large chain 1.